We begin with the raw amino-acid sequence, 54 residues long: uncharacterized protein (54 aa).

To B.subtilis XkdX.

This is an uncharacterized protein from Bacillus subtilis (strain 168).